Here is a 477-residue protein sequence, read N- to C-terminus: Myc-associated zinc finger protein (477 aa).

2 disordered regions span residues 59–78 and 121–146; these read AQSPFQAAPAPPPTPQAPAA and TVDTAALKQPPAPPPPPPPVSAPAAE. Positions 130–141 are enriched in pro residues; sequence PPAPPPPPPPVS. 4 C2H2-type zinc fingers span residues 190-212, 279-301, 307-329, and 337-360; these read YICALCAKEFKNGYNLRRHEAIH, HACEMCGKAFRDVYHLNRHKLSH, YQCPVCQQRFKRKDRMSYHVRSH, and YNCSHCGKSFSRPDHLNSHVRQVH. Position 361 is a phosphoserine (S361). A C2H2-type 5 zinc finger spans residues 366 to 388; sequence FKCEKCEAAFATKDRLRAHTVRH. A C2H2-type 6; atypical zinc finger spans residues 392–413; that stretch reads VPCHVCGKMLSSAYISDHMKVH.

Interacts with BPTF. In terms of assembly, forms a heterodimer with MAZ isoform 2; the interaction inhibits MAZ isoform 1-mediated transcription activation. As to quaternary structure, forms a heterodimer with MAZ isoform 1; the interaction inhibits MAZ isoform 1-mediated transcription activation. In terms of tissue distribution, present in kidney, liver and brain. In the brain, highest levels are found in motor cortex and midfrontal cortex (at protein level). As to expression, expressed in the heart, brain, placenta, lung, liver, skeletal muscle and weakly expressed in the kidney. Expressed in the joint synovium.

It localises to the nucleus. Its function is as follows. Transcriptional regulator, potentially with dual roles in transcription initiation and termination. In terms of biological role, binds DNA and functions as a transcriptional activator. Binds to two G/A-rich sites, ME1a1 and ME1a2, within the MYC promoter having greater affinity for the former. Also binds to multiple G/C-rich sites within the promoter of the Sp1 family of transcription factors. Functionally, binds DNA and functions as a transcriptional activator. Inhibits MAZ isoform 1-mediated transcription. Binds DNA and functions as a transcriptional activator. The chain is Myc-associated zinc finger protein (MAZ) from Homo sapiens (Human).